A 57-amino-acid polypeptide reads, in one-letter code: MARYRHNRSRSRSRHRRRRRGHRGGRYRRRRRRGRYGHRRHHRGHSRRRRKRRRSRH.

Residues M1–H57 form a disordered region.

It belongs to the protamine P1 family. Testis.

The protein localises to the nucleus. It is found in the chromosome. Its function is as follows. Protamines substitute for histones in the chromatin of sperm during the haploid phase of spermatogenesis. They compact sperm DNA into a highly condensed, stable and inactive complex. The chain is Sperm protamine P1-type from Alligator mississippiensis (American alligator).